Consider the following 459-residue polypeptide: Cyclooctat-9-en-7-ol 5-monooxygenase (459 aa).

The segment at 1 to 27 (MRERGPVTPAKSSAPPERPWTTGTAPG) is disordered. Cys-408 lines the heme pocket.

It belongs to the cytochrome P450 family. It depends on heme as a cofactor.

The enzyme catalyses cyclooctat-9-en-7-ol + AH2 + O2 = cyclooctat-9-ene-5,7-diol + A + H2O. Its function is as follows. Involved in the biosynthesis of cyclooctatin, a potent inhibitor of lysophospholipase. Catalyzes the stereospecific hydroxylation of cyclooctat-9-en-7-ol to form cyclooctat-9-ene-5,7-diol. This chain is Cyclooctat-9-en-7-ol 5-monooxygenase, found in Streptomyces melanosporofaciens.